We begin with the raw amino-acid sequence, 425 residues long: Putative type I restriction enzyme MjaX specificity subunit (425 aa).

Belongs to the type-I restriction system S methylase family.

In terms of biological role, a putative specificity (S) subunit of a type I restriction enzyme thought to recognize 5'-TAGN(6)TGC-3'; the other subunits are unknown. The polypeptide is Putative type I restriction enzyme MjaX specificity subunit (Methanocaldococcus jannaschii (strain ATCC 43067 / DSM 2661 / JAL-1 / JCM 10045 / NBRC 100440) (Methanococcus jannaschii)).